We begin with the raw amino-acid sequence, 423 residues long: Histidine--tRNA ligase (423 aa).

The protein belongs to the class-II aminoacyl-tRNA synthetase family. In terms of assembly, homodimer.

The protein resides in the cytoplasm. The catalysed reaction is tRNA(His) + L-histidine + ATP = L-histidyl-tRNA(His) + AMP + diphosphate + H(+). The polypeptide is Histidine--tRNA ligase (Actinobacillus pleuropneumoniae serotype 7 (strain AP76)).